The primary structure comprises 179 residues: uncharacterized protein (179 aa).

Positions 1-27 form a signal peptide, or 24; it reads MKTISKQLSAVIFPFIFSACVSQSASS.

This is an uncharacterized protein from Haemophilus influenzae (strain ATCC 51907 / DSM 11121 / KW20 / Rd).